Here is a 151-residue protein sequence, read N- to C-terminus: Probable cGMP 3',5'-cyclic phosphodiesterase subunit delta (151 aa).

It belongs to the PDE6D/unc-119 family. As to quaternary structure, interacts with Pde6.

It is found in the nucleus. Its subcellular location is the cytoplasm. This is Probable cGMP 3',5'-cyclic phosphodiesterase subunit delta from Drosophila erecta (Fruit fly).